The chain runs to 345 residues: Probable dual-specificity RNA methyltransferase RlmN (345 aa).

Residue Glu93 is the Proton acceptor of the active site. The Radical SAM core domain maps to 99–326 (DDERATLCIS…TTIRASRGED (228 aa)). An intrachain disulfide couples Cys106 to Cys331. [4Fe-4S] cluster is bound by residues Cys113, Cys117, and Cys120. S-adenosyl-L-methionine-binding positions include 158 to 159 (GE), Ser190, 212 to 214 (SLH), and His288. Catalysis depends on Cys331, which acts as the S-methylcysteine intermediate.

This sequence belongs to the radical SAM superfamily. RlmN family. The cofactor is [4Fe-4S] cluster.

The protein resides in the cytoplasm. The enzyme catalyses adenosine(2503) in 23S rRNA + 2 reduced [2Fe-2S]-[ferredoxin] + 2 S-adenosyl-L-methionine = 2-methyladenosine(2503) in 23S rRNA + 5'-deoxyadenosine + L-methionine + 2 oxidized [2Fe-2S]-[ferredoxin] + S-adenosyl-L-homocysteine. It carries out the reaction adenosine(37) in tRNA + 2 reduced [2Fe-2S]-[ferredoxin] + 2 S-adenosyl-L-methionine = 2-methyladenosine(37) in tRNA + 5'-deoxyadenosine + L-methionine + 2 oxidized [2Fe-2S]-[ferredoxin] + S-adenosyl-L-homocysteine. Specifically methylates position 2 of adenine 2503 in 23S rRNA and position 2 of adenine 37 in tRNAs. This chain is Probable dual-specificity RNA methyltransferase RlmN, found in Bacteroides thetaiotaomicron (strain ATCC 29148 / DSM 2079 / JCM 5827 / CCUG 10774 / NCTC 10582 / VPI-5482 / E50).